The primary structure comprises 451 residues: uncharacterized protein (451 aa).

One can recognise a TRAM domain in the interval 2–60 (VVKVKQKIPLKIKRMGINGEGIGFYQKTLVFVPGALKGEDIFCQITAVKRNFAEAKLLT). Residues C73, C79, C82, and C162 each contribute to the [4Fe-4S] cluster site. 4 residues coordinate S-adenosyl-L-methionine: Q283, Y312, D333, and D381. Catalysis depends on C408, which acts as the Nucleophile.

This sequence belongs to the class I-like SAM-binding methyltransferase superfamily. RNA M5U methyltransferase family.

This is an uncharacterized protein from Streptococcus pyogenes serotype M1.